A 183-amino-acid chain; its full sequence is Large ribosomal subunit protein uL13m (183 aa).

Belongs to the universal ribosomal protein uL13 family. Component of the mitochondrial large ribosomal subunit (mt-LSU). Mature N.crassa 74S mitochondrial ribosomes consist of a small (37S) and a large (54S) subunit. The 37S small subunit contains a 16S ribosomal RNA (16S mt-rRNA) and 32 different proteins. The 54S large subunit contains a 23S rRNA (23S mt-rRNA) and 42 different proteins.

The protein resides in the mitochondrion. Component of the mitochondrial ribosome (mitoribosome), a dedicated translation machinery responsible for the synthesis of mitochondrial genome-encoded proteins, including at least some of the essential transmembrane subunits of the mitochondrial respiratory chain. The mitoribosomes are attached to the mitochondrial inner membrane and translation products are cotranslationally integrated into the membrane. The polypeptide is Large ribosomal subunit protein uL13m (mrpl23) (Neurospora crassa (strain ATCC 24698 / 74-OR23-1A / CBS 708.71 / DSM 1257 / FGSC 987)).